Reading from the N-terminus, the 338-residue chain is 1-aminocyclopropane-1-carboxylate deaminase (338 aa).

The residue at position 51 (K51) is an N6-(pyridoxal phosphate)lysine. S78 functions as the Nucleophile in the catalytic mechanism.

This sequence belongs to the ACC deaminase/D-cysteine desulfhydrase family. Homotrimer. Pyridoxal 5'-phosphate is required as a cofactor.

The catalysed reaction is 1-aminocyclopropane-1-carboxylate + H2O = 2-oxobutanoate + NH4(+). In terms of biological role, catalyzes a cyclopropane ring-opening reaction, the irreversible conversion of 1-aminocyclopropane-1-carboxylate (ACC) to ammonia and alpha-ketobutyrate. Allows growth on ACC as a nitrogen source. The chain is 1-aminocyclopropane-1-carboxylate deaminase from Acidovorax ebreus (strain TPSY) (Diaphorobacter sp. (strain TPSY)).